Consider the following 574-residue polypeptide: MKASQFFISTLKEAPADAEIVSHKLMMRAGMIKKLGAGLYTYMPVGLRVIRKVEQIVREEMNAAGAVEVLMPVVQPGELWQETGRWDKMGDELLRFKDRHERDFVMQPTSEEVVTDIARTEIRSYKQLPVNFYQIQTKFRDERRPRFGIMRGREFTMKDAYSFDRDAEGLKVSYQKMYDAYTRIFQRFGLEFRAVAADNGAIGGSGSHEFHVIADTGEDAIIYCPDSDYAANIEAAEAVAPAAPRAAATEALTKTHTPGRAKCEAVAEQLGIPLQRTIKSIVLATEVEGGEPQIWLLLLRGDHELNEVKASKVPGLADFRFATEGEILRAFGTRPGYLGPVGTKLPVKVVADRTAAAMSDFVVGANEEDYHFTGVNWGRDLPEPEVYDLRNVVAGDASPDGKGTLAICRGIEVGHVFMLGTRYSEAMNATFLDENGKTQPMVMGCYGIGITRILGAAIEQNYDARGIIWPASIAPFQVVICPVGYDRSDAVREEADRLHAELVAAGIDVMLDDRGERPGAMFADWELIGVPFRVVVGDRGLKEGKLEFQGRRDEAATAVAPADVLATLKARLAQ.

The protein belongs to the class-II aminoacyl-tRNA synthetase family. ProS type 1 subfamily. Homodimer.

The protein resides in the cytoplasm. The enzyme catalyses tRNA(Pro) + L-proline + ATP = L-prolyl-tRNA(Pro) + AMP + diphosphate. Its function is as follows. Catalyzes the attachment of proline to tRNA(Pro) in a two-step reaction: proline is first activated by ATP to form Pro-AMP and then transferred to the acceptor end of tRNA(Pro). As ProRS can inadvertently accommodate and process non-cognate amino acids such as alanine and cysteine, to avoid such errors it has two additional distinct editing activities against alanine. One activity is designated as 'pretransfer' editing and involves the tRNA(Pro)-independent hydrolysis of activated Ala-AMP. The other activity is designated 'posttransfer' editing and involves deacylation of mischarged Ala-tRNA(Pro). The misacylated Cys-tRNA(Pro) is not edited by ProRS. This Ralstonia pickettii (strain 12J) protein is Proline--tRNA ligase.